Consider the following 301-residue polypeptide: tRNA-cytidine(32) 2-sulfurtransferase (301 aa).

Positions 55 to 60 (SGGKDS) match the PP-loop motif motif. [4Fe-4S] cluster-binding residues include Cys130, Cys133, and Cys221.

The protein belongs to the TtcA family. In terms of assembly, homodimer. Mg(2+) serves as cofactor. The cofactor is [4Fe-4S] cluster.

The protein localises to the cytoplasm. The enzyme catalyses cytidine(32) in tRNA + S-sulfanyl-L-cysteinyl-[cysteine desulfurase] + AH2 + ATP = 2-thiocytidine(32) in tRNA + L-cysteinyl-[cysteine desulfurase] + A + AMP + diphosphate + H(+). The protein operates within tRNA modification. Its function is as follows. Catalyzes the ATP-dependent 2-thiolation of cytidine in position 32 of tRNA, to form 2-thiocytidine (s(2)C32). The sulfur atoms are provided by the cysteine/cysteine desulfurase (IscS) system. The protein is tRNA-cytidine(32) 2-sulfurtransferase of Acinetobacter baumannii (strain AB307-0294).